Reading from the N-terminus, the 461-residue chain is Photosystem II CP43 reaction center protein (461 aa).

A propeptide spanning residues 1–2 is cleaved from the precursor; it reads ME. The residue at position 3 (T3) is an N-acetylthreonine. T3 carries the post-translational modification Phosphothreonine. The next 5 membrane-spanning stretches (helical) occupy residues 57–81, 122–143, 166–188, 243–263, and 279–300; these read LFEVAHFVPEKPMYEQGLILLPHLA, LLGPETLEESFPFFGYVWKDRN, KALYFGGVYDTWAPGGGDVRKIS, KPFAWARRALVWSGEAYLSYS, and WFNNTAYPSEFYGPTGPEASQA. [CaMn4O5] cluster is bound at residue E355. A helical membrane pass occupies residues 435 to 459; the sequence is RARAAAAGFEKGIDRDFEPVLSMTP.

The protein belongs to the PsbB/PsbC family. PsbC subfamily. In terms of assembly, PSII is composed of 1 copy each of membrane proteins PsbA, PsbB, PsbC, PsbD, PsbE, PsbF, PsbH, PsbI, PsbJ, PsbK, PsbL, PsbM, PsbT, PsbX, PsbY, PsbZ, Psb30/Ycf12, at least 3 peripheral proteins of the oxygen-evolving complex and a large number of cofactors. It forms dimeric complexes. It depends on Binds multiple chlorophylls and provides some of the ligands for the Ca-4Mn-5O cluster of the oxygen-evolving complex. It may also provide a ligand for a Cl- that is required for oxygen evolution. PSII binds additional chlorophylls, carotenoids and specific lipids. as a cofactor.

It is found in the plastid. Its subcellular location is the chloroplast thylakoid membrane. Its function is as follows. One of the components of the core complex of photosystem II (PSII). It binds chlorophyll and helps catalyze the primary light-induced photochemical processes of PSII. PSII is a light-driven water:plastoquinone oxidoreductase, using light energy to abstract electrons from H(2)O, generating O(2) and a proton gradient subsequently used for ATP formation. The sequence is that of Photosystem II CP43 reaction center protein from Trachelium caeruleum (Blue throatwort).